Here is a 138-residue protein sequence, read N- to C-terminus: ATP synthase epsilon chain (138 aa).

This sequence belongs to the ATPase epsilon chain family. F-type ATPases have 2 components, CF(1) - the catalytic core - and CF(0) - the membrane proton channel. CF(1) has five subunits: alpha(3), beta(3), gamma(1), delta(1), epsilon(1). CF(0) has three main subunits: a, b and c.

The protein resides in the cell inner membrane. Functionally, produces ATP from ADP in the presence of a proton gradient across the membrane. In Cupriavidus necator (strain ATCC 17699 / DSM 428 / KCTC 22496 / NCIMB 10442 / H16 / Stanier 337) (Ralstonia eutropha), this protein is ATP synthase epsilon chain.